We begin with the raw amino-acid sequence, 617 residues long: MMVPLAKLASPAYQCFHALKIKKNYLPLCATRWSSTCKVPRITTHYTIYPRDQDKRWEGVNMERFAEEADVVIVGAGPAGLSAATRLKQLAAQHEKDLRVCLVEKAAHIGAHTLSGACLDPRAFEELFPDWKEKGAPLNTPVTEDRFGILTEKYRIPVPILPGLPMNNHGNYVVRLGHLVSWMGEQAEALGVEVYPGYAAAEILFHEDGSVKGIATNDVGIQKDGAPKTTFERGLELHAKVTIFAEGCHGHLAKQLYKKFDLRANCEPQTYGIGLKELWVIDEKKWKPGRVDHTVGWPLDRHTYGGSFLYHLNEGEPLLALGFVVGLDYQNPYLSPFREFQRWKHHPSIKPTLEGGKRIAYGARALNEGGFQSIPKLTFPGGLLIGCSPGFMNVPKIKGTHTAMKSGTLAAESIFNQLTSENLQSKTIGLHVTEYEDNLKNSWVWKELYSVRNIRPSCHGILGVYGGMIYTGIFYWIFRGMEPWTLKHKGSDSDQLKPAKDCTPIEYPKPDGQISFDLLSSVALSGTNHEHDQPAHLTLKDDSVPVNRNLSIYDGPEQRFCPAGVYEFVPLEQGDGFRLQINAQNCVHCKTCDIKDPSQNINWVVPEGGGGPAYNGM.

The N-terminal 33 residues, 1 to 33 (MMVPLAKLASPAYQCFHALKIKKNYLPLCATRW), are a transit peptide targeting the mitochondrion. FAD is bound at residue 75-80 (GAGPAG). N6-acetyllysine is present on K96. Residues 109-130 (IGAHTLSGACLDPRAFEELFPD) lie within the membrane without spanning it. Residues K132 and K223 each carry the N6-acetyllysine modification. A ubiquinone-binding residues include G305 and G306. At K357 the chain carries N6-acetyllysine. Residues 428–447 (IGLHVTEYEDNLKNSWVWKE) lie within the membrane without spanning it. S551 is subject to Phosphoserine. [4Fe-4S] cluster-binding residues include C561, C586, C589, and C592. The 4Fe-4S ferredoxin-type domain occupies 577 to 606 (FRLQINAQNCVHCKTCDIKDPSQNINWVVP).

In terms of assembly, monomer. It depends on [4Fe-4S] cluster as a cofactor. FAD serves as cofactor.

It localises to the mitochondrion inner membrane. The enzyme catalyses a ubiquinone + reduced [electron-transfer flavoprotein] = a ubiquinol + oxidized [electron-transfer flavoprotein] + H(+). Its function is as follows. Accepts electrons from ETF and reduces ubiquinone. In Sus scrofa (Pig), this protein is Electron transfer flavoprotein-ubiquinone oxidoreductase, mitochondrial (ETFDH).